The primary structure comprises 455 residues: Kynurenine 3-monooxygenase (455 aa).

Belongs to the aromatic-ring hydroxylase family. KMO subfamily. The cofactor is FAD.

The catalysed reaction is L-kynurenine + NADPH + O2 + H(+) = 3-hydroxy-L-kynurenine + NADP(+) + H2O. It functions in the pathway cofactor biosynthesis; NAD(+) biosynthesis; quinolinate from L-kynurenine: step 1/3. Catalyzes the hydroxylation of L-kynurenine (L-Kyn) to form 3-hydroxy-L-kynurenine (L-3OHKyn). Required for synthesis of quinolinic acid. This is Kynurenine 3-monooxygenase from Xanthomonas euvesicatoria pv. vesicatoria (strain 85-10) (Xanthomonas campestris pv. vesicatoria).